The following is a 154-amino-acid chain: Calmodulin-like protein 6 (154 aa).

EF-hand domains are found at residues Met-1–Ile-36, Ile-37–Glu-72, Val-77–Lys-112, and Lys-115–Phe-150. Residues Asp-14, Asp-16, Asp-18, Lys-20, Glu-25, Asp-50, Asn-52, Asp-54, Cys-56, Glu-61, Asp-90, Asn-92, Asp-94, Glu-101, Asp-128, Asp-130, Asp-132, Arg-134, and Glu-139 each coordinate Ca(2+).

It belongs to the calmodulin family.

Functionally, potential calcium sensor. The protein is Calmodulin-like protein 6 (CML6) of Arabidopsis thaliana (Mouse-ear cress).